A 180-amino-acid chain; its full sequence is ATP-dependent protease subunit HslV (180 aa).

The active site involves threonine 2. 3 residues coordinate Na(+): glycine 157, cysteine 160, and serine 163.

Belongs to the peptidase T1B family. HslV subfamily. A double ring-shaped homohexamer of HslV is capped on each side by a ring-shaped HslU homohexamer. The assembly of the HslU/HslV complex is dependent on binding of ATP.

The protein resides in the cytoplasm. The enzyme catalyses ATP-dependent cleavage of peptide bonds with broad specificity.. With respect to regulation, allosterically activated by HslU binding. In terms of biological role, protease subunit of a proteasome-like degradation complex believed to be a general protein degrading machinery. This is ATP-dependent protease subunit HslV from Wigglesworthia glossinidia brevipalpis.